The primary structure comprises 254 residues: Cytokine-inducible SH2-containing protein (254 aa).

Positions 82-188 constitute an SH2 domain; sequence WYWGSITASE…ATTPALPTPK (107 aa). The interval 171–195 is disordered; that stretch reads TRSDSPDLATTPALPTPKEDAPGDP. An SOCS box domain is found at 205–253; that stretch reads KLVQPFVRRSSTRSLQHLCRLVINRLVVDVDCLPLPRRMADYLRQYPFQ.

Stably associated with the tyrosine-phosphorylated IL3 receptor beta chain and tyrosine-phosphorylated EPO receptor (EPOR).

It participates in protein modification; protein ubiquitination. Functionally, SOCS family proteins form part of a classical negative feedback system that regulates cytokine signal transduction. CIS is involved in the negative regulation of cytokines that signal through the JAK-STAT5 pathway such as erythropoietin, prolactin and interleukin 3 (IL3) receptor. Inhibits STAT5 trans-activation by suppressing its tyrosine phosphorylation. May be a substrate recognition component of a SCF-like ECS (Elongin BC-CUL2/5-SOCS-box protein) E3 ubiquitin-protein ligase complex which mediates the ubiquitination and subsequent proteasomal degradation of target proteins. In Bos taurus (Bovine), this protein is Cytokine-inducible SH2-containing protein (CISH).